The chain runs to 379 residues: Eukaryotic translation initiation factor 3 subunit M (379 aa).

The PCI domain occupies 179 to 341 (RSEEASKVMI…RKVIISSVAQ (163 aa)).

It belongs to the eIF-3 subunit M family. As to quaternary structure, component of the eukaryotic translation initiation factor 3 (eIF-3) complex.

It localises to the cytoplasm. In terms of biological role, component of the eukaryotic translation initiation factor 3 (eIF-3) complex, which is involved in protein synthesis of a specialized repertoire of mRNAs and, together with other initiation factors, stimulates binding of mRNA and methionyl-tRNAi to the 40S ribosome. The eIF-3 complex specifically targets and initiates translation of a subset of mRNAs involved in cell proliferation. The sequence is that of Eukaryotic translation initiation factor 3 subunit M from Nematostella vectensis (Starlet sea anemone).